The primary structure comprises 288 residues: MCPCPHSQAQGETDGEAEWHNAALDFTHAMSYGDYLKLDKVLDAQFPLSPDHNEMLFIIQHQTSELWMKLMLHELRAAREHVKSGKLGPALKMLARVSRIFDQLVHAWAVLATMTPTEYNTIRPYLGQSSGFQSYQYREIEFILGNKNATLLKPHAHRAELLAALEQALHTPSLYDEAIRLMAAQGLPVSQERLARDAAAGTCYEASVEAAWRQVYQAPERYWDLYQLAEKLIDLEDSFRQWRFRHVTTVERIIGFKPGTGGTEGVGYLRSMLDTILFPELWRLRSNL.

Substrate is bound by residues 57–61 (FIIQH), Tyr-119, and Arg-123. Residue His-246 participates in heme binding. Thr-260 is a substrate binding site.

This sequence belongs to the tryptophan 2,3-dioxygenase family. As to quaternary structure, homotetramer. Heme serves as cofactor.

The enzyme catalyses L-tryptophan + O2 = N-formyl-L-kynurenine. Its pathway is amino-acid degradation; L-tryptophan degradation via kynurenine pathway; L-kynurenine from L-tryptophan: step 1/2. Functionally, heme-dependent dioxygenase that catalyzes the oxidative cleavage of the L-tryptophan (L-Trp) pyrrole ring and converts L-tryptophan to N-formyl-L-kynurenine. Catalyzes the oxidative cleavage of the indole moiety. The chain is Tryptophan 2,3-dioxygenase from Pseudomonas aeruginosa (strain ATCC 15692 / DSM 22644 / CIP 104116 / JCM 14847 / LMG 12228 / 1C / PRS 101 / PAO1).